Consider the following 83-residue polypeptide: Putative beta-neurotoxin RjAa15f (83 aa).

Positions 1–18 are cleaved as a signal peptide; it reads MKILIFIIASFMLIGVEC. In terms of domain architecture, LCN-type CS-alpha/beta spans 19 to 82; sequence KEGYPMGRNG…VWDSSNNKCV (64 aa). 4 disulfide bridges follow: cysteine 29–cysteine 81, cysteine 33–cysteine 55, cysteine 40–cysteine 62, and cysteine 44–cysteine 64.

Belongs to the long (4 C-C) scorpion toxin superfamily. Sodium channel inhibitor family. Beta subfamily. Expressed by the venom gland.

The protein resides in the secreted. Beta toxins bind voltage-independently at site-4 of sodium channels (Nav) and shift the voltage of activation toward more negative potentials thereby affecting sodium channel activation and promoting spontaneous and repetitive firing. The chain is Putative beta-neurotoxin RjAa15f from Rhopalurus junceus (Caribbean blue scorpion).